Consider the following 529-residue polypeptide: 56 kDa type-specific antigen (529 aa).

A signal peptide spans 1–22 (MKKIMLIASAMSALSLPFSASA). Residues 67-87 (LTTSMPFGGTLAAGMTIAPGF) traverse the membrane as a helical segment. A compositionally biased stretch (basic and acidic residues) spans 106–116 (GKTGSDADIRS). Disordered regions lie at residues 106–134 (GKTGSDADIRSGADSPMPQRYKLTPPQPT) and 392–424 (DGGCNGGGDNKKKRGASEDSDAGGASKGGKGKE). A helical transmembrane segment spans residues 477 to 492 (TGMVASGALGVAINAA).

It localises to the cell membrane. In terms of biological role, may be an adherent factor for rickettsial adsorption to the host-cell surface and a determinant of virulence of individual rickettsial strain. It is the major outer membrane protein. The polypeptide is 56 kDa type-specific antigen (Orientia tsutsugamushi (Rickettsia tsutsugamushi)).